A 241-amino-acid polypeptide reads, in one-letter code: Chalcone--flavanone isomerase C (241 aa).

Substrate is bound by residues T50, N115, and S192.

The protein belongs to the chalcone isomerase family.

The catalysed reaction is a chalcone = a flavanone.. It functions in the pathway secondary metabolite biosynthesis; flavonoid biosynthesis. In terms of biological role, catalyzes the intramolecular cyclization of bicyclic chalcones into tricyclic (S)-flavanones. Responsible for the isomerization of 4,2',4',6'-tetrahydroxychalcone (also termed chalcone) into naringenin. The chain is Chalcone--flavanone isomerase C (CHI3) from Petunia hybrida (Petunia).